The following is an 833-amino-acid chain: Scavenger receptor class F member 2 (833 aa).

The first 33 residues, Met-1–Ala-33, serve as a signal peptide directing secretion. The Extracellular portion of the chain corresponds to Ala-34–Lys-433. 6 EGF-like domains span residues Leu-63–Asp-102, Cys-114–Glu-145, Trp-140–Ala-174, Ser-175–Asn-204, Asn-205–Asp-233, and Phe-228–Arg-262. Intrachain disulfides connect Cys-67–Cys-78, Cys-72–Cys-90, Cys-92–Cys-101, Cys-118–Cys-126, Cys-120–Cys-133, Cys-135–Cys-144, Cys-148–Cys-155, Cys-150–Cys-162, Cys-164–Cys-173, Cys-177–Cys-185, Cys-179–Cys-192, Cys-194–Cys-203, Cys-207–Cys-214, Cys-209–Cys-221, Cys-223–Cys-232, Cys-236–Cys-243, Cys-238–Cys-250, and Cys-252–Cys-261. Residue Asn-75 is glycosylated (N-linked (GlcNAc...) asparagine). N-linked (GlcNAc...) asparagine glycans are attached at residues Asn-302 and Asn-357. Residues Cys-364–Asn-395 form the EGF-like 7 domain. Disulfide bonds link Cys-368–Cys-376, Cys-371–Cys-383, and Cys-385–Cys-394. Residue Asn-395 is glycosylated (N-linked (GlcNAc...) asparagine). Residues Gly-434 to Gly-454 form a helical membrane-spanning segment. The Cytoplasmic segment spans residues Cys-455 to Ser-833. A phosphoserine mark is found at Ser-538 and Ser-600. Residues Ser-578 to Ser-833 form a disordered region. Tyr-615 is modified (phosphotyrosine). A compositionally biased stretch (basic and acidic residues) spans Ala-619 to Asn-630. A phosphoserine mark is found at Ser-638, Ser-640, and Ser-695. A Phosphothreonine modification is found at Thr-712. Residues Glu-748–Lys-761 show a composition bias toward basic and acidic residues. Residues Ala-781–Ala-798 are compositionally biased toward low complexity. Basic residues predominate over residues Lys-804–Ser-816.

As to quaternary structure, homophilic and heterophilic interaction via its extracellular domain. Interacts with SCARF1. The heterophilic interaction with SCARF1, which is stronger than the homophilic interaction with itself, is suppressed by the presence of SCARF1 ligand such as Ac-LDL.

The protein localises to the membrane. Its function is as follows. Probable adhesion protein, which mediates homophilic and heterophilic interactions. In contrast to SCARF1, it poorly mediates the binding and degradation of acetylated low density lipoprotein (Ac-LDL). This Mus musculus (Mouse) protein is Scavenger receptor class F member 2 (Scarf2).